The sequence spans 342 residues: Ribosomal RNA small subunit methyltransferase C (342 aa).

Belongs to the methyltransferase superfamily. RsmC family. Monomer.

The protein resides in the cytoplasm. The enzyme catalyses guanosine(1207) in 16S rRNA + S-adenosyl-L-methionine = N(2)-methylguanosine(1207) in 16S rRNA + S-adenosyl-L-homocysteine + H(+). In terms of biological role, specifically methylates the guanine in position 1207 of 16S rRNA in the 30S particle. This Shewanella oneidensis (strain ATCC 700550 / JCM 31522 / CIP 106686 / LMG 19005 / NCIMB 14063 / MR-1) protein is Ribosomal RNA small subunit methyltransferase C.